The primary structure comprises 115 residues: Ig heavy chain V region PJ14 (115 aa).

The N-terminal stretch at 1 to 19 (MAVLALLFCLVTFPSCILS) is a signal peptide. Residues 20–115 (QVQLKESGPG…TDDTARYYCA (96 aa)) enclose the Ig-like domain.

This is Ig heavy chain V region PJ14 from Mus musculus (Mouse).